The primary structure comprises 449 residues: Phosphoglucosamine mutase (449 aa).

S102 acts as the Phosphoserine intermediate in catalysis. Residues S102, D243, D245, and D247 each coordinate Mg(2+). S102 is modified (phosphoserine).

Belongs to the phosphohexose mutase family. Requires Mg(2+) as cofactor. In terms of processing, activated by phosphorylation.

The catalysed reaction is alpha-D-glucosamine 1-phosphate = D-glucosamine 6-phosphate. Functionally, catalyzes the conversion of glucosamine-6-phosphate to glucosamine-1-phosphate. In Maricaulis maris (strain MCS10) (Caulobacter maris), this protein is Phosphoglucosamine mutase.